Here is a 450-residue protein sequence, read N- to C-terminus: IMP-specific 5'-nucleotidase 1 (450 aa).

Residue H144 participates in ATP binding. Catalysis depends on D172, which acts as the Nucleophile. 6 residues coordinate IMP: D172, D174, D180, T208, D376, and K384. The Mg(2+) site is built by D172 and D174. Residue D174 is the Proton donor of the active site. Position 411 (D411) interacts with Mg(2+).

The protein belongs to the ISN1 family. In terms of assembly, homotetramer. It depends on Mg(2+) as a cofactor.

The catalysed reaction is IMP + H2O = inosine + phosphate. Allosterically activated by ATP. ATP binding is a prerequisite to magnesium and substrate binding. ATP binds to 2 of the subunits in the homotetramer inducing a closure of these 2 subunits and the release of the C-terminal loop, thereby activating the enzyme. In terms of biological role, IMP-specific 5'-nucleotidase involved in IMP (inosine 5'-phosphate) degradation. This is IMP-specific 5'-nucleotidase 1 (ISN1) from Saccharomyces cerevisiae (strain ATCC 204508 / S288c) (Baker's yeast).